We begin with the raw amino-acid sequence, 74 residues long: Conotoxin AbVII (74 aa).

A signal peptide spans 1–17; it reads VLIIAVLFLTACQLTTA. A propeptide spanning residues 18-40 is cleaved from the precursor; sequence ETSSRGKQKHRALRSTDKNSRMT. A disordered region spans residues 19-41; it reads TSSRGKQKHRALRSTDKNSRMTK. Intrachain disulfides connect cysteine 43–cysteine 57, cysteine 50–cysteine 61, and cysteine 56–cysteine 68.

It belongs to the conotoxin O1 superfamily. Expressed by the venom duct.

The protein resides in the secreted. This is Conotoxin AbVII from Conus abbreviatus (Abbreviated cone).